An 857-amino-acid chain; its full sequence is Envelope glycoprotein B (857 aa).

A signal peptide spans 1–21 (MTRRRVLSVVVLLAALACRLG). At 22–732 (AQTPEQPAPP…SGFISFFKNP (711 aa)) the chain is on the virion surface side. 5 cysteine pairs are disulfide-bonded: C51–C528, C68–C484, C141–C206, C295–C342, and C551–C588. N76 is a glycosylation site (N-linked (GlcNAc...) asparagine; by host). The involved in fusion and/or binding to host membrane stretch occupies residues 108–114 (IYNGWYA). N163 carries an N-linked (GlcNAc...) asparagine; by host glycan. The segment at 192 to 200 (GWLIWTYRT) is involved in fusion and/or binding to host membrane. 4 N-linked (GlcNAc...) asparagine; by host glycosylation sites follow: N290, N329, N348, and N395. The disordered stretch occupies residues 398-452 (ELTTPTSSPPSSPSPPAPPAARGSTSAAVLRRRRRDAGNATTPVPPAAPGKSLGT). Residues 404–416 (SSPPSSPSPPAPP) show a composition bias toward pro residues. Residues N436, N563, and N629 are each glycosylated (N-linked (GlcNAc...) asparagine; by host). Hydrophobic membrane proximal region stretches follow at residues 678 to 730 (LDNA…SFFK) and 709 to 729 (NLVS…ISFF). A helical membrane pass occupies residues 733–753 (FGGMLILVLVAGVVILVISLT). Residues 754–857 (RRTRQMSQQP…ALLGEAETEF (104 aa)) are Intravirion-facing. Residues 832 to 857 (FPGLRRRRYHDPETAAALLGEAETEF) form a disordered region. Low complexity predominate over residues 845–857 (TAAALLGEAETEF).

This sequence belongs to the herpesviridae glycoprotein B family. Homotrimer; disulfide-linked. Binds to heparan sulfate proteoglycans. Interacts with gH/gL heterodimer. Post-translationally, a proteolytic cleavage by host furin generates two subunits that remain linked by disulfide bonds.

Its subcellular location is the virion membrane. The protein localises to the host cell membrane. It is found in the host endosome membrane. It localises to the host Golgi apparatus membrane. In terms of biological role, envelope glycoprotein that forms spikes at the surface of virion envelope. Essential for the initial attachment to heparan sulfate moieties of the host cell surface proteoglycans. Involved in fusion of viral and cellular membranes leading to virus entry into the host cell. Following initial binding to its host receptors, membrane fusion is mediated by the fusion machinery composed at least of gB and the heterodimer gH/gL. May be involved in the fusion between the virion envelope and the outer nuclear membrane during virion egress. This Epstein-Barr virus (strain GD1) (HHV-4) protein is Envelope glycoprotein B.